Consider the following 590-residue polypeptide: MDKKGEIVFVNGPVVKADKMNGFIMNELVYVGKERLIGEIIELEGDLATIQVYEETTEMQPGEPVFSTGSPLSVELGPGIIGNIFDGIQRPLPVIAEKTGSFIKRGIEVNPLDRDREWTVSVKVKLGDRVKPGQVVAEVPETSIVTHRVMVPPHLSGEVVEVVPNGKYTVDQEIVTVKDDKGNNHQIRLHQKWPVRRPRPCGERLPIKKPLLTGQRVFDTFFPLGMGGTAAIPGGFGAGKTMTQHQLAKWSSADIIVYVGCGERGNEMTDVLEEFPKLEDPSTGKSMMERTVLIANTSNMPVAAREASIYTGITIAEFYRDMGYNVALMADSTSRWAEALREISGRLEEMPAEEGFPAYLPSRLAEFYERAGYVKTLGQDREGSISLIGAVSPPGGDFSEPVTQNTKRYVRCFWALDKSLASARHFPAVNWLESYSEYLEDLSGWLKENINEDWIKLRNMAMELLKEEDRLQEIVKLVGEDVLPDNQRLILEVARLIKIGFLQQNAFSKVDRFATPEKQYWMLKIIMFLYEKARPLIKNNIPISRVKNNELFSEVIKMKENIPNGDLDKFKDLMARIEEYYNRLWENYQE.

234–241 lines the ATP pocket; sequence GGFGAGKT.

Belongs to the ATPase alpha/beta chains family.

It catalyses the reaction ATP + H2O + 4 H(+)(in) = ADP + phosphate + 5 H(+)(out). Its function is as follows. Produces ATP from ADP in the presence of a proton gradient across the membrane. The V-type alpha chain is a catalytic subunit. This chain is V-type ATP synthase alpha chain, found in Halothermothrix orenii (strain H 168 / OCM 544 / DSM 9562).